Reading from the N-terminus, the 319-residue chain is Lipooligosaccharide heptosyltransferase 2 (319 aa).

It belongs to the glycosyltransferase 9 family.

It carries out the reaction an L-alpha-D-Hep-(1-&gt;5)-[alpha-Kdo-(2-&gt;4)]-alpha-Kdo-(2-&gt;6)-lipid A + ADP-L-glycero-beta-D-manno-heptose = an L-alpha-D-Hep-(1-&gt;3)-L-alpha-D-Hep-(1-&gt;5)-[alpha-Kdo-(2-&gt;4)]-alpha-Kdo-(2-&gt;6)-lipid A + ADP + H(+). Its pathway is bacterial outer membrane biogenesis; LOS core biosynthesis. Glycosyltransferase involved in the biosynthesis of the core oligosaccharide region of lipooligosaccharide (LOS). Catalyzes the addition of the second heptose unit to the heptosyl-Kdo2-lipid A module. This Campylobacter jejuni subsp. jejuni serotype O:2 (strain ATCC 700819 / NCTC 11168) protein is Lipooligosaccharide heptosyltransferase 2.